A 469-amino-acid polypeptide reads, in one-letter code: UDP-N-acetylmuramoylalanine--D-glutamate ligase (469 aa).

ATP is bound at residue 121 to 127; that stretch reads GTNGKST.

This sequence belongs to the MurCDEF family.

The protein resides in the cytoplasm. The catalysed reaction is UDP-N-acetyl-alpha-D-muramoyl-L-alanine + D-glutamate + ATP = UDP-N-acetyl-alpha-D-muramoyl-L-alanyl-D-glutamate + ADP + phosphate + H(+). It participates in cell wall biogenesis; peptidoglycan biosynthesis. Functionally, cell wall formation. Catalyzes the addition of glutamate to the nucleotide precursor UDP-N-acetylmuramoyl-L-alanine (UMA). The protein is UDP-N-acetylmuramoylalanine--D-glutamate ligase of Rhodopseudomonas palustris (strain ATCC BAA-98 / CGA009).